Consider the following 294-residue polypeptide: uncharacterized protein (294 aa).

This is an uncharacterized protein from Halobacterium salinarum (strain ATCC 700922 / JCM 11081 / NRC-1) (Halobacterium halobium).